Here is an 86-residue protein sequence, read N- to C-terminus: Large ribosomal subunit protein bL27 (86 aa).

A disordered region spans residues 1–26; it reads MATKKAGGSSRNGRDSAGRRLGVKKS.

It belongs to the bacterial ribosomal protein bL27 family.

In Rickettsia akari (strain Hartford), this protein is Large ribosomal subunit protein bL27.